We begin with the raw amino-acid sequence, 288 residues long: Homoserine kinase (288 aa).

Position 78–88 (78–88 (PLARGLGSSSS)) interacts with ATP.

This sequence belongs to the GHMP kinase family. Homoserine kinase subfamily.

The protein localises to the cytoplasm. It carries out the reaction L-homoserine + ATP = O-phospho-L-homoserine + ADP + H(+). Its pathway is amino-acid biosynthesis; L-threonine biosynthesis; L-threonine from L-aspartate: step 4/5. Functionally, catalyzes the ATP-dependent phosphorylation of L-homoserine to L-homoserine phosphate. This chain is Homoserine kinase, found in Streptococcus mutans serotype c (strain ATCC 700610 / UA159).